The chain runs to 443 residues: Glucose-6-phosphate isomerase (443 aa).

Glu-285 serves as the catalytic Proton donor. Residues His-306 and Lys-420 contribute to the active site.

It belongs to the GPI family.

It is found in the cytoplasm. The enzyme catalyses alpha-D-glucose 6-phosphate = beta-D-fructose 6-phosphate. Its pathway is carbohydrate biosynthesis; gluconeogenesis. It participates in carbohydrate degradation; glycolysis; D-glyceraldehyde 3-phosphate and glycerone phosphate from D-glucose: step 2/4. Catalyzes the reversible isomerization of glucose-6-phosphate to fructose-6-phosphate. The sequence is that of Glucose-6-phosphate isomerase from Staphylococcus haemolyticus (strain JCSC1435).